The primary structure comprises 272 residues: 4-hydroxy-tetrahydrodipicolinate reductase (272 aa).

Residues Gly-12 to Met-17 and Glu-38 each bind NAD(+). An NADP(+)-binding site is contributed by Arg-39. NAD(+)-binding positions include Gly-102–Thr-104 and Ser-126–Met-129. His-160 serves as the catalytic Proton donor/acceptor. Residue His-161 participates in (S)-2,3,4,5-tetrahydrodipicolinate binding. The active-site Proton donor is Lys-164. Gly-170–Thr-171 contributes to the (S)-2,3,4,5-tetrahydrodipicolinate binding site.

This sequence belongs to the DapB family.

The protein localises to the cytoplasm. It catalyses the reaction (S)-2,3,4,5-tetrahydrodipicolinate + NAD(+) + H2O = (2S,4S)-4-hydroxy-2,3,4,5-tetrahydrodipicolinate + NADH + H(+). The enzyme catalyses (S)-2,3,4,5-tetrahydrodipicolinate + NADP(+) + H2O = (2S,4S)-4-hydroxy-2,3,4,5-tetrahydrodipicolinate + NADPH + H(+). It functions in the pathway amino-acid biosynthesis; L-lysine biosynthesis via DAP pathway; (S)-tetrahydrodipicolinate from L-aspartate: step 4/4. Its function is as follows. Catalyzes the conversion of 4-hydroxy-tetrahydrodipicolinate (HTPA) to tetrahydrodipicolinate. This chain is 4-hydroxy-tetrahydrodipicolinate reductase, found in Sinorhizobium medicae (strain WSM419) (Ensifer medicae).